The primary structure comprises 213 residues: Kynurenine formamidase (213 aa).

Residue Trp-18 participates in substrate binding. Zn(2+) contacts are provided by His-48, His-52, and Asp-54. The active-site Proton donor/acceptor is the His-58. Zn(2+) contacts are provided by His-160 and Glu-172.

It belongs to the Cyclase 1 superfamily. KynB family. In terms of assembly, homodimer. It depends on Zn(2+) as a cofactor.

It catalyses the reaction N-formyl-L-kynurenine + H2O = L-kynurenine + formate + H(+). It participates in amino-acid degradation; L-tryptophan degradation via kynurenine pathway; L-kynurenine from L-tryptophan: step 2/2. Catalyzes the hydrolysis of N-formyl-L-kynurenine to L-kynurenine, the second step in the kynurenine pathway of tryptophan degradation. The chain is Kynurenine formamidase from Burkholderia pseudomallei (strain 1106a).